The following is a 123-amino-acid chain: Ribosome-binding factor A (123 aa).

Belongs to the RbfA family. In terms of assembly, monomer. Binds 30S ribosomal subunits, but not 50S ribosomal subunits or 70S ribosomes.

The protein resides in the cytoplasm. One of several proteins that assist in the late maturation steps of the functional core of the 30S ribosomal subunit. Associates with free 30S ribosomal subunits (but not with 30S subunits that are part of 70S ribosomes or polysomes). Required for efficient processing of 16S rRNA. May interact with the 5'-terminal helix region of 16S rRNA. This Legionella pneumophila (strain Paris) protein is Ribosome-binding factor A.